We begin with the raw amino-acid sequence, 229 residues long: Purine nucleoside phosphorylase BB_0467 (229 aa).

Zn(2+) contacts are provided by His55, Cys91, and His108.

The protein belongs to the purine nucleoside phosphorylase YfiH/LACC1 family. In terms of assembly, homodimer. Requires Cu(2+) as cofactor. Zn(2+) serves as cofactor.

It catalyses the reaction adenosine + phosphate = alpha-D-ribose 1-phosphate + adenine. It carries out the reaction S-methyl-5'-thioadenosine + phosphate = 5-(methylsulfanyl)-alpha-D-ribose 1-phosphate + adenine. The catalysed reaction is inosine + phosphate = alpha-D-ribose 1-phosphate + hypoxanthine. The enzyme catalyses adenosine + H2O + H(+) = inosine + NH4(+). Functionally, purine nucleoside enzyme that catalyzes the phosphorolysis of adenosine and inosine nucleosides, yielding D-ribose 1-phosphate and the respective free bases, adenine and hypoxanthine. Also catalyzes the phosphorolysis of S-methyl-5'-thioadenosine into adenine and S-methyl-5-thio-alpha-D-ribose 1-phosphate. Also has adenosine deaminase activity. The chain is Purine nucleoside phosphorylase BB_0467 from Borreliella burgdorferi (strain ATCC 35210 / DSM 4680 / CIP 102532 / B31) (Borrelia burgdorferi).